A 362-amino-acid polypeptide reads, in one-letter code: Phosphoserine aminotransferase (362 aa).

Residues Ser-9 and Arg-42 each contribute to the L-glutamate site. Residues 76-77 (GR), Trp-102, Thr-153, Asp-174, and Gln-197 each bind pyridoxal 5'-phosphate. The residue at position 198 (Lys-198) is an N6-(pyridoxal phosphate)lysine. Pyridoxal 5'-phosphate is bound at residue 239 to 240 (NT).

Belongs to the class-V pyridoxal-phosphate-dependent aminotransferase family. SerC subfamily. In terms of assembly, homodimer. Pyridoxal 5'-phosphate is required as a cofactor.

Its subcellular location is the cytoplasm. It catalyses the reaction O-phospho-L-serine + 2-oxoglutarate = 3-phosphooxypyruvate + L-glutamate. It carries out the reaction 4-(phosphooxy)-L-threonine + 2-oxoglutarate = (R)-3-hydroxy-2-oxo-4-phosphooxybutanoate + L-glutamate. It functions in the pathway amino-acid biosynthesis; L-serine biosynthesis; L-serine from 3-phospho-D-glycerate: step 2/3. The protein operates within cofactor biosynthesis; pyridoxine 5'-phosphate biosynthesis; pyridoxine 5'-phosphate from D-erythrose 4-phosphate: step 3/5. In terms of biological role, catalyzes the reversible conversion of 3-phosphohydroxypyruvate to phosphoserine and of 3-hydroxy-2-oxo-4-phosphonooxybutanoate to phosphohydroxythreonine. This is Phosphoserine aminotransferase from Escherichia coli O7:K1 (strain IAI39 / ExPEC).